The sequence spans 586 residues: ATP-dependent lipid A-core flippase (586 aa).

The next 4 helical transmembrane spans lie at 25–45 (AYFI…AQLI), 74–94 (LWFV…GAYF), 163–183 (VAWF…AFIC), and 264–284 (VLHI…MILW). Positions 28–317 (IISFIGFGVF…LTKINSIIQK (290 aa)) constitute an ABC transmembrane type-1 domain. One can recognise an ABC transporter domain in the interval 349 to 583 (VELKDVHFGY…SGVYANLYHS (235 aa)). 382–389 (GSSGSGKS) serves as a coordination point for ATP.

Belongs to the ABC transporter superfamily. Lipid exporter (TC 3.A.1.106) family. Homodimer.

The protein localises to the cell inner membrane. It carries out the reaction ATP + H2O + lipid A-core oligosaccharideSide 1 = ADP + phosphate + lipid A-core oligosaccharideSide 2.. Functionally, involved in lipopolysaccharide (LPS) biosynthesis. Translocates lipid A-core from the inner to the outer leaflet of the inner membrane. Transmembrane domains (TMD) form a pore in the inner membrane and the ATP-binding domain (NBD) is responsible for energy generation. In Saccharophagus degradans (strain 2-40 / ATCC 43961 / DSM 17024), this protein is ATP-dependent lipid A-core flippase.